The chain runs to 423 residues: Galactosylceramide sulfotransferase (423 aa).

The Cytoplasmic portion of the chain corresponds to 1-14 (MPLPQKKRWESMAK). Residues 15–35 (GLVLGALFTSFLLLLYSYAVP) form a helical; Signal-anchor for type II membrane protein membrane-spanning segment. Residues 36 to 423 (PLYTGLASTT…WKFIRDFLRW (388 aa)) are Lumenal-facing. The disordered stretch occupies residues 48 to 70 (GAAPCSPAPREPEAPTSANGSAG). N-linked (GlcNAc...) asparagine glycans are attached at residues Asn66, Asn156, and Asn312.

This sequence belongs to the galactose-3-O-sulfotransferase family.

The protein localises to the golgi apparatus membrane. The enzyme catalyses a beta-D-galactosyl-(1&lt;-&gt;1')-N-acylsphing-4-enine + 3'-phosphoadenylyl sulfate = an N-acyl-1-beta-D-(3-O-sulfo)-galactosyl-sphing-4-enine + adenosine 3',5'-bisphosphate + H(+). The catalysed reaction is a 1-O-alkyl-2-acyl-3-O-(beta-D-galactosyl)-sn-glycerol + 3'-phosphoadenylyl sulfate = a 1-O-alkyl-2-acyl-3-(beta-D-3-sulfogalactosyl)-sn-glycerol + adenosine 3',5'-bisphosphate + H(+). It carries out the reaction a beta-D-Gal-(1&lt;-&gt;1')-ceramide + 3'-phosphoadenylyl sulfate = 1-(3-O-sulfo-beta-D-galactosyl)-ceramide + adenosine 3',5'-bisphosphate + H(+). It catalyses the reaction a 1,2-diacyl-3-O-(beta-D-galactosyl)-sn-glycerol + 3'-phosphoadenylyl sulfate = 1,2-diacyl-3-(3-O-sulfo-beta-D-galactosyl)-sn-glycerol + adenosine 3',5'-bisphosphate + H(+). The enzyme catalyses a beta-D-Gal-(1-&gt;4)-beta-D-Glc-(1&lt;-&gt;1)-Cer(d18:1(4E)) + 3'-phosphoadenylyl sulfate = beta-D-3-sulfogalactosyl-(1-&gt;4)-beta-D-glucosyl-(1&lt;-&gt;1')-N-acylsphing-4-enine + adenosine 3',5'-bisphosphate + H(+). The protein operates within lipid metabolism; sphingolipid metabolism. In terms of biological role, catalyzes the transfer of a sulfate group to position 3 of non-reducing beta-galactosyl residues in glycerolipids and sphingolipids, therefore participates in the biosynthesis of sulfoglycolipids. Catalyzes the synthesis of galactosylceramide sulfate (sulfatide), a major lipid component of the myelin sheath and of monogalactosylalkylacylglycerol sulfate (seminolipid), present in spermatocytes. Seems to prefer beta-glycosides at the non-reducing termini of sugar chains attached to a lipid moiety. Also acts on lactosylceramide, galactosyl 1-alkyl-2-sn-glycerol and galactosyl diacylglycerol (in vitro). This Bos taurus (Bovine) protein is Galactosylceramide sulfotransferase.